A 202-amino-acid polypeptide reads, in one-letter code: Snake venom metalloproteinase Ac1 (202 aa).

The region spanning 6-202 (RYMEIVIVVD…ENPPCILNKP (197 aa)) is the Peptidase M12B domain. The Ca(2+) site is built by Glu9 and Asp93. 2 disulfide bridges follow: Cys117–Cys197 and Cys157–Cys181. His142 is a binding site for Zn(2+). The active site involves Glu143. The Zn(2+) site is built by His146 and His152. Ca(2+)-binding residues include Cys197 and Asn200.

The protein belongs to the venom metalloproteinase (M12B) family. P-I subfamily. In terms of assembly, monomer. Zn(2+) is required as a cofactor. In terms of tissue distribution, expressed by the venom gland.

The protein resides in the secreted. Functionally, snake venom metalloproteinase that impairs hemostasis in the envenomed animal. This Deinagkistrodon acutus (Hundred-pace snake) protein is Snake venom metalloproteinase Ac1.